The following is a 231-amino-acid chain: Putative histone H1.9 (231 aa).

In terms of domain architecture, H15 spans 113-177 (QKPSTSKVIL…GSAGSFTLGK (65 aa)). At serine 135 the chain carries Phosphoserine. Residues 177–214 (KKQASKSKLKVKRQRQQRWRSGQRPFGQHRSLLGSKQG) are disordered. Residues 179 to 194 (QASKSKLKVKRQRQQR) show a composition bias toward basic residues.

It belongs to the histone H1/H5 family. Expressed exclusively in the testis.

The protein localises to the nucleus. It is found in the chromosome. Functionally, DNA-binding protein that may be implicated in chromatin remodeling and/or transcriptional regulation during spermiogenesis, the process of spermatid maturation into spermatozoa. The protein is Putative histone H1.9 of Homo sapiens (Human).